The following is a 133-amino-acid chain: MNAVVWWQSLLLVMLGGAFGSGLRFVIGSCLLQRFGAGFPWGTLAVNLIGSFVAGFLLIWVDKRGSAGWSWRMLLIVGLIGGLTTFSSLMVECLVFVRSERSLIVGFYLCITLLFGLLFVFLGARLGAFVCDD.

4 helical membrane-spanning segments follow: residues 3–23 (AVVW…GSGL), 41–61 (WGTL…LIWV), 76–96 (IVGL…CLVF), and 103–123 (LIVG…VFLG). Na(+)-binding residues include glycine 81 and threonine 84.

It belongs to the fluoride channel Fluc/FEX (TC 1.A.43) family.

The protein resides in the cell inner membrane. The enzyme catalyses fluoride(in) = fluoride(out). Its activity is regulated as follows. Na(+) is not transported, but it plays an essential structural role and its presence is essential for fluoride channel function. In terms of biological role, fluoride-specific ion channel. Important for reducing fluoride concentration in the cell, thus reducing its toxicity. This chain is Fluoride-specific ion channel FluC, found in Xylella fastidiosa (strain M23).